The following is a 451-amino-acid chain: NADP-specific glutamate dehydrogenase (451 aa).

Lys114 is an active-site residue.

This sequence belongs to the Glu/Leu/Phe/Val dehydrogenases family. In terms of assembly, homohexamer.

The enzyme catalyses L-glutamate + NADP(+) + H2O = 2-oxoglutarate + NH4(+) + NADPH + H(+). In Fusarium fujikuroi (Bakanae and foot rot disease fungus), this protein is NADP-specific glutamate dehydrogenase (GDH2).